Consider the following 468-residue polypeptide: Chromosomal replication initiator protein DnaA (468 aa).

Residues 1 to 84 (MSSSLWLQCL…RFEVGSRPVS (84 aa)) are domain I, interacts with DnaA modulators. A disordered region spans residues 80-106 (SRPVSAPKPAPTRTPADVAAESSAPAQ). Positions 84-131 (SAPKPAPTRTPADVAAESSAPAQLQARKPVHKTWDDDPQAIAAINHRS) are domain II. The segment at 132–348 (NMNPKHKFDN…GALNRVIANA (217 aa)) is domain III, AAA+ region. ATP is bound by residues Gly176, Gly178, Lys179, and Thr180. Residues 349–468 (NFTGRPITID…YSNLIRTLSS (120 aa)) are domain IV, binds dsDNA.

The protein belongs to the DnaA family. Oligomerizes as a right-handed, spiral filament on DNA at oriC.

The protein resides in the cytoplasm. Functionally, plays an essential role in the initiation and regulation of chromosomal replication. ATP-DnaA binds to the origin of replication (oriC) to initiate formation of the DNA replication initiation complex once per cell cycle. Binds the DnaA box (a 9 base pair repeat at the origin) and separates the double-stranded (ds)DNA. Forms a right-handed helical filament on oriC DNA; dsDNA binds to the exterior of the filament while single-stranded (ss)DNA is stabiized in the filament's interior. The ATP-DnaA-oriC complex binds and stabilizes one strand of the AT-rich DNA unwinding element (DUE), permitting loading of DNA polymerase. After initiation quickly degrades to an ADP-DnaA complex that is not apt for DNA replication. Binds acidic phospholipids. In Vibrio parahaemolyticus serotype O3:K6 (strain RIMD 2210633), this protein is Chromosomal replication initiator protein DnaA.